We begin with the raw amino-acid sequence, 383 residues long: Retrovirus-related Pol polyprotein from type-1 retrotransposable element R1 3 (383 aa).

The 88-residue stretch at Val1–Val88 folds into the Reverse transcriptase domain. The tract at residues Leu229–Ser383 is nucleic acid-binding endonuclease.

The catalysed reaction is DNA(n) + a 2'-deoxyribonucleoside 5'-triphosphate = DNA(n+1) + diphosphate. This chain is Retrovirus-related Pol polyprotein from type-1 retrotransposable element R1 3, found in Nasonia vitripennis (Parasitic wasp).